Reading from the N-terminus, the 136-residue chain is Transcription antitermination protein NusB (136 aa).

Belongs to the NusB family.

Involved in transcription antitermination. Required for transcription of ribosomal RNA (rRNA) genes. Binds specifically to the boxA antiterminator sequence of the ribosomal RNA (rrn) operons. The chain is Transcription antitermination protein NusB from Pseudoalteromonas translucida (strain TAC 125).